The primary structure comprises 320 residues: Protein LATERAL ROOT PRIMORDIUM 1 (320 aa).

The interval 90–110 (QTTVGTSSNNSGSGSGASGTA) is disordered. The Zn(2+) site is built by Cys-112, Cys-115, Cys-123, Cys-128, Cys-132, and Cys-139. The zn(2)-C6 fungal-type; degenerate DNA-binding region spans 112–139 (CQDCGNQAKKECKQRRCRTCCKSRGFDC). Residues 150–223 (AARRRERQVM…QDGGGSREAW (74 aa)) are disordered. Residues 168–177 (GSSLSTSSGT) show a composition bias toward low complexity. Polar residues predominate over residues 193-214 (ATSHTSTSNTPPQSFETSSSRQ). The Required for homo- and heterodimerization motif lies at 256 to 259 (IGGH).

This sequence belongs to the SHI protein family. In terms of assembly, homodimer. In terms of tissue distribution, restricted to lateral root primordia.

The protein resides in the nucleus. Transcription activator that binds DNA on 5'-ACTCTAC-3' and promotes auxin homeostasis-regulating gene expression (e.g. YUC genes), as well as genes affecting stamen development, cell expansion and timing of flowering. Synergistically with other SHI-related proteins, regulates gynoecium, stamen and leaf development in a dose-dependent manner, controlling apical-basal patterning. Promotes style and stigma formation, and influence vascular development during gynoecium development. May also have a role in the formation and/or maintenance of the shoot apical meristem (SAM). Modulates root growth. This Arabidopsis thaliana (Mouse-ear cress) protein is Protein LATERAL ROOT PRIMORDIUM 1 (LRP1).